The primary structure comprises 1010 residues: PHD finger protein 20 (1010 aa).

Tudor domains lie at 4–69 (HPPN…RPLE) and 83–147 (GSSE…GNAR). Disordered stretches follow at residues 142–373 (IVGN…EGQL) and 483–609 (EKSP…GKLK). The segment covering 147–246 (RPKETDHKSL…VEKKPEKDLV (100 aa)) has biased composition (basic and acidic residues). At Ser159 the chain carries Phosphoserine. Residues 257-269 (KRKRGRPPSITPT) constitute a DNA-binding region (a.T hook). Residues 267-280 (TPTAVDSNSQTLQP) show a composition bias toward polar residues. Basic and acidic residues-rich tracts occupy residues 292-325 (KRSDTPLKRPRLDKNSPQEQSKKRSENSDKDLSR), 483-493 (EKSPEPEEGPG), and 525-541 (AKEKEKTKEKKFKELVR). Residues 455–485 (FRCKVLDCLKFFRKAKLLHYHMKYFHGMEKS) form a C2H2-type zinc finger. The span at 542–554 (VKPKKKKKKKKKT) shows a compositional bias: basic residues. The PHD-type zinc finger occupies 657-703 (RCICEVQEENDFMIQCEECQCWQHGVCMGLLEENVPEKYTCYVCQDP). Residues 804-827 (RSEESPSYRTLNGAVEKPSPLPRS) are disordered. At Lys841 the chain carries N6-acetyllysine. 2 positions are modified to phosphoserine: Ser876 and Ser878. The interval 877-902 (LSPRLGWPIDQDRSRGDIDPKPSSPK) is disordered. Residues 886 to 902 (DQDRSRGDIDPKPSSPK) are compositionally biased toward basic and acidic residues.

As to quaternary structure, homodimer; disulfide-linked. Component of some MLL1/MLL complex, at least composed of the core components KMT2A/MLL1, ASH2L, HCFC1, WDR5 and RBBP5, as well as the facultative components BACC1, CHD8, E2F6, HSP70, INO80C, KANSL1, LAS1L, MAX, MCRS1, MGA, MYST1/MOF, PELP1, PHF20, PRP31, RING2, RUVB1/TIP49A, RUVB2/TIP49B, SENP3, TAF1, TAF4, TAF6, TAF7, TAF9 and TEX10. Component of the NSL complex at least composed of MOF/KAT8, KANSL1, KANSL2, KANSL3, MCRS1, PHF20, OGT1/OGT, WDR5 and HCFC1. Ubiquitinated by TRIM26; leading to proteasomal degradation.

Its subcellular location is the nucleus. Functionally, contributes to methyllysine-dependent p53/TP53 stabilization and up-regulation after DNA damage. Methyllysine-binding protein, component of the MOF histone acetyltransferase protein complex. Not required for maintaining the global histone H4 'Lys-16' acetylation (H4K16ac) levels or locus specific histone acetylation, but instead works downstream in transcriptional regulation of MOF target genes. As part of the NSL complex it may be involved in acetylation of nucleosomal histone H4 on several lysine residues. The chain is PHD finger protein 20 (Phf20) from Mus musculus (Mouse).